The chain runs to 295 residues: Mycothiol acetyltransferase (295 aa).

N-acetyltransferase domains are found at residues 5–141 (VEIR…TPLP) and 149–295 (VRLR…MYRR). Glu-35 is a binding site for 1D-myo-inositol 2-(L-cysteinylamino)-2-deoxy-alpha-D-glucopyranoside. 76-78 (LVV) contacts acetyl-CoA. 1D-myo-inositol 2-(L-cysteinylamino)-2-deoxy-alpha-D-glucopyranoside is bound by residues Glu-176, Lys-215, and Glu-229. Residues 233–235 (VGV) and 240–246 (RGTGLGR) contribute to the acetyl-CoA site. Tyr-267 provides a ligand contact to 1D-myo-inositol 2-(L-cysteinylamino)-2-deoxy-alpha-D-glucopyranoside. 272–277 (NTAAVR) serves as a coordination point for acetyl-CoA.

Belongs to the acetyltransferase family. MshD subfamily. In terms of assembly, monomer.

It carries out the reaction 1D-myo-inositol 2-(L-cysteinylamino)-2-deoxy-alpha-D-glucopyranoside + acetyl-CoA = mycothiol + CoA + H(+). Its function is as follows. Catalyzes the transfer of acetyl from acetyl-CoA to desacetylmycothiol (Cys-GlcN-Ins) to form mycothiol. This chain is Mycothiol acetyltransferase, found in Thermobispora bispora (strain ATCC 19993 / DSM 43833 / CBS 139.67 / JCM 10125 / KCTC 9307 / NBRC 14880 / R51).